We begin with the raw amino-acid sequence, 100 residues long: Putative antiporter subunit mnhF2 (100 aa).

The next 3 helical transmembrane spans lie at 5 to 25 (FTQI…LVCL), 38 to 60 (VVSF…VIFN), and 65 to 87 (LDSI…RFIG).

Belongs to the CPA3 antiporters (TC 2.A.63) subunit F family. May form a heterooligomeric complex that consists of seven subunits: mnhA2, mnhB2, mnhC2, mnhD2, mnhE2, mnhF2 and mnhG2.

The protein resides in the cell membrane. The chain is Putative antiporter subunit mnhF2 (mnhF2) from Staphylococcus epidermidis (strain ATCC 35984 / DSM 28319 / BCRC 17069 / CCUG 31568 / BM 3577 / RP62A).